A 338-amino-acid chain; its full sequence is Ferrochelatase (338 aa).

Residues His-202 and Glu-283 each coordinate Fe cation.

It belongs to the ferrochelatase family.

The protein localises to the cytoplasm. The catalysed reaction is heme b + 2 H(+) = protoporphyrin IX + Fe(2+). Its pathway is porphyrin-containing compound metabolism; protoheme biosynthesis; protoheme from protoporphyrin-IX: step 1/1. Functionally, catalyzes the ferrous insertion into protoporphyrin IX. The sequence is that of Ferrochelatase from Acinetobacter baumannii (strain ATCC 17978 / DSM 105126 / CIP 53.77 / LMG 1025 / NCDC KC755 / 5377).